The primary structure comprises 273 residues: 2-dehydro-3-deoxyphosphooctonate aldolase (273 aa).

Belongs to the KdsA family.

Its subcellular location is the cytoplasm. It catalyses the reaction D-arabinose 5-phosphate + phosphoenolpyruvate + H2O = 3-deoxy-alpha-D-manno-2-octulosonate-8-phosphate + phosphate. It participates in carbohydrate biosynthesis; 3-deoxy-D-manno-octulosonate biosynthesis; 3-deoxy-D-manno-octulosonate from D-ribulose 5-phosphate: step 2/3. It functions in the pathway bacterial outer membrane biogenesis; lipopolysaccharide biosynthesis. This is 2-dehydro-3-deoxyphosphooctonate aldolase from Cyanothece sp. (strain PCC 7425 / ATCC 29141).